The sequence spans 297 residues: tRNA dimethylallyltransferase (297 aa).

ATP is bound at residue 9–16; the sequence is GPTASGKS. 11–16 is a substrate binding site; the sequence is TASGKS. 2 interaction with substrate tRNA regions span residues 34–37 and 155–159; these read DSMQ and QRVIR.

The protein belongs to the IPP transferase family. As to quaternary structure, monomer. The cofactor is Mg(2+).

It carries out the reaction adenosine(37) in tRNA + dimethylallyl diphosphate = N(6)-dimethylallyladenosine(37) in tRNA + diphosphate. Its function is as follows. Catalyzes the transfer of a dimethylallyl group onto the adenine at position 37 in tRNAs that read codons beginning with uridine, leading to the formation of N6-(dimethylallyl)adenosine (i(6)A). This chain is tRNA dimethylallyltransferase, found in Leuconostoc mesenteroides subsp. mesenteroides (strain ATCC 8293 / DSM 20343 / BCRC 11652 / CCM 1803 / JCM 6124 / NCDO 523 / NBRC 100496 / NCIMB 8023 / NCTC 12954 / NRRL B-1118 / 37Y).